We begin with the raw amino-acid sequence, 547 residues long: Sterol carrier protein 2 (547 aa).

Phosphoserine is present on residues Ser-3 and Ser-8. Lys-40 is modified (N6-succinyllysine). Lys-132 carries the N6-acetyllysine; alternate modification. Lys-132 is subject to N6-succinyllysine; alternate. N6-succinyllysine is present on Lys-168. Lys-177 is modified (N6-acetyllysine). Lys-183 carries the N6-acetyllysine; alternate modification. Lys-183 carries the N6-succinyllysine; alternate modification. 2 positions are modified to N6-succinyllysine: Lys-211 and Lys-282. Lys-341, Lys-432, Lys-438, Lys-443, and Lys-453 each carry N6-acetyllysine; alternate. Lys-341, Lys-432, Lys-438, Lys-443, and Lys-453 each carry N6-succinyllysine; alternate. One can recognise an SCP2 domain in the interval 433–543; that stretch reads ANLIFKEIEK…KLQSLQLQPD (111 aa). At Lys-464 the chain carries N6-succinyllysine. Lys-470 is modified (N6-acetyllysine; alternate). N6-succinyllysine; alternate is present on Lys-470. Lys-479 is modified (N6-succinyllysine). The residue at position 491 (Lys-491) is an N6-acetyllysine. 2 positions are modified to N6-succinyllysine: Lys-492 and Lys-511. Ser-516 bears the Phosphoserine mark. N6-succinyllysine occurs at positions 522 and 534. A Phosphoserine modification is found at Ser-537. N6-succinyllysine is present on Lys-544. The Microbody targeting signal motif lies at 545–547; the sequence is AKL.

The protein in the N-terminal section; belongs to the thiolase-like superfamily. Thiolase family. As to quaternary structure, interacts with PEX5; the interaction is essential for peroxisomal import. PreSCP2, a protein with a molecular mass of about 15 kDa, is processed into its mature form (SCP2) by proteolytic cleavage of a 20 residue leader sequence after translocation into peroxisomes. Liver &gt; intestine &gt; brain &gt; lung, colon, stomach, spleen, kidney, heart and ovary. As to expression, expressed in liver (at protein level).

It is found in the peroxisome. It localises to the cytoplasm. The protein resides in the mitochondrion. It catalyses the reaction an acyl-CoA + acetyl-CoA = a 3-oxoacyl-CoA + CoA. The enzyme catalyses choloyl-CoA + propanoyl-CoA = 3alpha,7alpha,12alpha-trihydroxy-24-oxo-5beta-cholestan-26-oyl-CoA + CoA. The catalysed reaction is 4,8,12-trimethyltridecanoyl-CoA + propanoyl-CoA = 3-oxopristanoyl-CoA + CoA. It carries out the reaction hexanoyl-CoA + acetyl-CoA = 3-oxooctanoyl-CoA + CoA. It catalyses the reaction tetradecanoyl-CoA + acetyl-CoA = 3-oxohexadecanoyl-CoA + CoA. The enzyme catalyses 3-oxohexadecanedioyl-CoA + CoA = tetradecanedioyl-CoA + acetyl-CoA. The catalysed reaction is propanoyl-CoA + tetradecanoyl-CoA = 3-oxo-2-methylhexadecanoyl-CoA + CoA. It carries out the reaction butanoyl-CoA + acetyl-CoA = 3-oxohexanoyl-CoA + CoA. It catalyses the reaction octanoyl-CoA + acetyl-CoA = 3-oxodecanoyl-CoA + CoA. The enzyme catalyses decanoyl-CoA + acetyl-CoA = 3-oxododecanoyl-CoA + CoA. The catalysed reaction is dodecanoyl-CoA + acetyl-CoA = 3-oxotetradecanoyl-CoA + CoA. It carries out the reaction hexadecanoyl-CoA + acetyl-CoA = 3-oxooctadecanoyl-CoA + CoA. It catalyses the reaction 3-oxo-(9Z-octadecenoyl)-CoA + CoA = (7Z)-hexadecenoyl-CoA + acetyl-CoA. The enzyme catalyses 7-dehydrocholesterol(in) = 7-dehydrocholesterol(out). Functionally, plays a crucial role in the peroxisomal oxidation of branched-chain fatty acids. Catalyzes the last step of the peroxisomal beta-oxidation of branched chain fatty acids and the side chain of the bile acid intermediates di- and trihydroxycoprostanic acids (DHCA and THCA). Also active with medium and long straight chain 3-oxoacyl-CoAs. Stimulates the microsomal conversion of 7-dehydrocholesterol to cholesterol and transfers phosphatidylcholine and 7-dehydrocholesterol between membrances, in vitro. Isoforms SCP2 and SCPx cooperate in peroxisomal oxidation of certain naturally occurring tetramethyl-branched fatty acyl-CoAs. Mediates the transfer of all common phospholipids, cholesterol and gangliosides from the endoplasmic reticulum to the plasma membrane. May play a role in regulating steroidogenesis. Stimulates the microsomal conversion of 7-dehydrocholesterol to cholesterol. Also binds fatty acids and fatty acyl Coenzyme A (CoA) such as phytanoyl-CoA. Involved in the regulation phospholipid synthesis in endoplasmic reticulum enhancing the incorporation of exogenous fatty acid into glycerides. Seems to stimulate the rate-limiting step in phosphatidic acid formation mediated by GPAT3. Isoforms SCP2 and SCPx cooperate in peroxisomal oxidation of certain naturally occurring tetramethyl-branched fatty acyl-CoAs. In Rattus norvegicus (Rat), this protein is Sterol carrier protein 2.